The following is a 190-amino-acid chain: Somatotropin (190 aa).

A signal peptide spans 1–17 (MNRVILLLSVMCVGVSS). Intrachain disulfides connect Cys69/Cys163 and Cys180/Cys188.

Belongs to the somatotropin/prolactin family.

The protein localises to the secreted. In terms of biological role, growth hormone plays an important role in growth control and is involved in the regulation of several anabolic processes. Implicated as an osmoregulatory substance important for seawater adaptation. The protein is Somatotropin (gh) of Paralichthys olivaceus (Bastard halibut).